Consider the following 163-residue polypeptide: Protein-export protein SecB (163 aa).

The protein belongs to the SecB family. In terms of assembly, homotetramer, a dimer of dimers. One homotetramer interacts with 1 SecA dimer.

Its subcellular location is the cytoplasm. Its function is as follows. One of the proteins required for the normal export of preproteins out of the cell cytoplasm. It is a molecular chaperone that binds to a subset of precursor proteins, maintaining them in a translocation-competent state. It also specifically binds to its receptor SecA. In Brucella canis (strain ATCC 23365 / NCTC 10854 / RM-666), this protein is Protein-export protein SecB.